Here is a 73-residue protein sequence, read N- to C-terminus: Small ribosomal subunit protein eS27 (73 aa).

Positions 28, 31, 47, and 50 each coordinate Zn(2+). The segment at 28 to 50 adopts a C4-type zinc-finger fold; it reads CVDCGNEQIIFGNASTEVKCHIC.

This sequence belongs to the eukaryotic ribosomal protein eS27 family. In terms of assembly, part of the 30S ribosomal subunit. Zn(2+) is required as a cofactor.

This chain is Small ribosomal subunit protein eS27, found in Methanopyrus kandleri (strain AV19 / DSM 6324 / JCM 9639 / NBRC 100938).